The primary structure comprises 353 residues: Methionine import ATP-binding protein MetN (353 aa).

Residues leucine 8–isoleucine 249 enclose the ABC transporter domain. Glycine 42–serine 49 serves as a coordination point for ATP.

This sequence belongs to the ABC transporter superfamily. Methionine importer (TC 3.A.1.24) family. The complex is composed of two ATP-binding proteins (MetN), two transmembrane proteins (MetI) and a solute-binding protein (MetQ).

Its subcellular location is the cell membrane. It catalyses the reaction L-methionine(out) + ATP + H2O = L-methionine(in) + ADP + phosphate + H(+). It carries out the reaction D-methionine(out) + ATP + H2O = D-methionine(in) + ADP + phosphate + H(+). Part of the ABC transporter complex MetNIQ involved in methionine import. Responsible for energy coupling to the transport system. The protein is Methionine import ATP-binding protein MetN of Streptococcus pneumoniae serotype 4 (strain ATCC BAA-334 / TIGR4).